The chain runs to 368 residues: Methionine import ATP-binding protein MetN (368 aa).

Residues isoleucine 5–isoleucine 260 enclose the ABC transporter domain. Glycine 41–serine 48 is an ATP binding site.

This sequence belongs to the ABC transporter superfamily. Methionine importer (TC 3.A.1.24) family. The complex is composed of two ATP-binding proteins (MetN), two transmembrane proteins (MetI) and a solute-binding protein (MetQ).

The protein resides in the cell membrane. The catalysed reaction is L-methionine(out) + ATP + H2O = L-methionine(in) + ADP + phosphate + H(+). It catalyses the reaction D-methionine(out) + ATP + H2O = D-methionine(in) + ADP + phosphate + H(+). Part of the ABC transporter complex MetNIQ involved in methionine import. Responsible for energy coupling to the transport system. The protein is Methionine import ATP-binding protein MetN of Lactococcus lactis subsp. lactis (strain IL1403) (Streptococcus lactis).